The chain runs to 462 residues: MGKTLFDKLWNRHVIYGKEGEPQLLYVDLHLIHEVTSPQAFEGLRLENRPLRRPDKTFATMDHNVPTEDIFNIQDLVAKKQIEALQTNCAEFGVTLADMGSDRQGIVHMVGPETGLTQPGKVIVCGDSHTATHGAFGAIGFGIGSSEVEHVFATQTIWQQKPKSMGIEINGKLPKGVYAKDIILHLIATYGVAFGTGYAVEYYGETIRNMSMEERMTICNMAIEGGAKMGMMAPDETTFEYVRGREYAPTDMDKAISDWKTLQTDSDAEYDLHIKMDASILEPYVTWGTNPEMGVPFSKAFPEIKDMNYERAYEYMGLKPGQTAEQIELGYVFIGSCTNARLSDLEEAARIVKGNKVKNNIRALVVPGSRQVRNAAESIGLDKIFIEAGFEWREPGCSMCLGMNPDQVPDGVHCASTSNRNFEGRQGKGARTHLVSPAMAAAAAINGHFIDIRKVAVISGGN.

Residues Cys-337, Cys-397, and Cys-400 each contribute to the [4Fe-4S] cluster site.

Belongs to the aconitase/IPM isomerase family. LeuC type 1 subfamily. Heterodimer of LeuC and LeuD. It depends on [4Fe-4S] cluster as a cofactor.

It catalyses the reaction (2R,3S)-3-isopropylmalate = (2S)-2-isopropylmalate. It participates in amino-acid biosynthesis; L-leucine biosynthesis; L-leucine from 3-methyl-2-oxobutanoate: step 2/4. Its function is as follows. Catalyzes the isomerization between 2-isopropylmalate and 3-isopropylmalate, via the formation of 2-isopropylmaleate. This chain is 3-isopropylmalate dehydratase large subunit, found in Listeria monocytogenes serovar 1/2a (strain ATCC BAA-679 / EGD-e).